The chain runs to 87 residues: Small ribosomal subunit protein uS17 (87 aa).

It belongs to the universal ribosomal protein uS17 family. Part of the 30S ribosomal subunit.

One of the primary rRNA binding proteins, it binds specifically to the 5'-end of 16S ribosomal RNA. In Staphylococcus aureus (strain Mu3 / ATCC 700698), this protein is Small ribosomal subunit protein uS17.